We begin with the raw amino-acid sequence, 575 residues long: Transcription factor COE2 (575 aa).

Residues 62 to 65 (RKSN) form an interaction with DNA region. The segment at 150–169 (CRVLLTHEVMCSRCCEKKSC) adopts a C5-type zinc-finger fold. 2 interaction with DNA regions span residues 196 to 203 (NCLKTAGN) and 235 to 238 (NNSK). One can recognise an IPT/TIG domain in the interval 253-336 (PCIKAISPSE…KGAPGRFIYT (84 aa)). Polar residues predominate over residues 441–453 (STQGNNQGYIRNT). The segment at 441 to 479 (STQGNNQGYIRNTSSISPRGYSSSSTPQQSNYSTSSNSM) is disordered. Residues 454–479 (SSISPRGYSSSSTPQQSNYSTSSNSM) are compositionally biased toward low complexity.

It belongs to the COE family. Forms either a homodimer or a heterodimer with a related family member. Interacts with SIX1. In terms of tissue distribution, in adult expressed in olfactory epithelium and at a much lower level in Purkinje cells of the cerebellum. In embryo expressed in epithalamus, in cells near the ventricular zone of mesencephalon and on the ventral surface of rhombencephalon, in the developing vomeronasal organ, at a lower level in developing spinal cord. Not expressed in developing retina, inner ear, dorsal root ganglia, trigeminal ganglia and glossopharyngeal ganglia.

Its subcellular location is the nucleus. In terms of biological role, transcription factor that, in osteoblasts, activates the decoy receptor for RANKL, TNFRSF11B, which in turn regulates osteoclast differentiation. Acts in synergy with the Wnt-responsive LEF1/CTNNB1 pathway. Recognizes variations of the palindromic sequence 5'-ATTCCCNNGGGAATT-3'. The protein is Transcription factor COE2 (Ebf2) of Mus musculus (Mouse).